Reading from the N-terminus, the 358-residue chain is Chorismate synthase (358 aa).

Positions 46 and 52 each coordinate NADP(+). FMN is bound by residues 123–125 (RSS), 239–240 (NA), Gly-283, 298–302 (KSVAT), and Arg-324.

It belongs to the chorismate synthase family. As to quaternary structure, homotetramer. It depends on FMNH2 as a cofactor.

The catalysed reaction is 5-O-(1-carboxyvinyl)-3-phosphoshikimate = chorismate + phosphate. It participates in metabolic intermediate biosynthesis; chorismate biosynthesis; chorismate from D-erythrose 4-phosphate and phosphoenolpyruvate: step 7/7. Catalyzes the anti-1,4-elimination of the C-3 phosphate and the C-6 proR hydrogen from 5-enolpyruvylshikimate-3-phosphate (EPSP) to yield chorismate, which is the branch point compound that serves as the starting substrate for the three terminal pathways of aromatic amino acid biosynthesis. This reaction introduces a second double bond into the aromatic ring system. This is Chorismate synthase from Parabacteroides distasonis (strain ATCC 8503 / DSM 20701 / CIP 104284 / JCM 5825 / NCTC 11152).